The primary structure comprises 859 residues: Linoleate 9S-lipoxygenase B (859 aa).

In terms of domain architecture, PLAT spans 34-158; the sequence is INIGASVVDG…RYKSDRIFFA (125 aa). In terms of domain architecture, Lipoxygenase spans 161-859; the sequence is AYLPSETPQP…GKGIPNSVSI (699 aa). Residues 213 to 246 are disordered; it reads EYARPILGGSSEYPYPRRGRTGREPTKADPNCES. Over residues 233–244 the composition is skewed to basic and acidic residues; that stretch reads TGREPTKADPNC. The Fe cation site is built by histidine 521, histidine 526, histidine 711, and isoleucine 859.

It belongs to the lipoxygenase family. In terms of assembly, monomer. The cofactor is Fe cation. As to expression, fruit specific.

It is found in the cytoplasm. The enzyme catalyses (9Z,12Z)-octadecadienoate + O2 = (9S)-hydroperoxy-(10E,12Z)-octadecadienoate. Its pathway is lipid metabolism; oxylipin biosynthesis. Its function is as follows. Plant lipoxygenase may be involved in a number of diverse aspects of plant physiology including growth and development, pest resistance, and senescence or responses to wounding. It catalyzes the hydroperoxidation of lipids containing a cis,cis-1,4-pentadiene structure. The polypeptide is Linoleate 9S-lipoxygenase B (LOX1.2) (Solanum lycopersicum (Tomato)).